A 409-amino-acid chain; its full sequence is ATPase ASNA1 homolog (409 aa).

An ATP-binding site is contributed by Lys-21–Thr-28. Asp-62 is an active-site residue. ATP contacts are provided by Glu-303 and Asn-330. 2 residues coordinate Zn(2+): Cys-342 and Cys-345.

The protein belongs to the arsA ATPase family. In terms of assembly, homodimer.

The protein localises to the cytoplasm. Its subcellular location is the endoplasmic reticulum. Its function is as follows. ATPase required for the post-translational delivery of tail-anchored (TA) proteins to the endoplasmic reticulum. Recognizes and selectively binds the transmembrane domain of TA proteins in the cytosol. This complex then targets to the endoplasmic reticulum by membrane-bound receptors, where the tail-anchored protein is released for insertion. This process is regulated by ATP binding and hydrolysis. ATP binding drives the homodimer towards the closed dimer state, facilitating recognition of newly synthesized TA membrane proteins. ATP hydrolysis is required for insertion. Subsequently, the homodimer reverts towards the open dimer state, lowering its affinity for the membrane-bound receptor, and returning it to the cytosol to initiate a new round of targeting. The protein is ATPase ASNA1 homolog of Leishmania major.